The primary structure comprises 143 residues: Nucleoside diphosphate kinase (143 aa).

Residues Lys11, Phe59, Arg87, Thr93, Arg104, and Asn114 each contribute to the ATP site. Catalysis depends on His117, which acts as the Pros-phosphohistidine intermediate.

Belongs to the NDK family. As to quaternary structure, homotetramer. It depends on Mg(2+) as a cofactor.

It localises to the cytoplasm. It catalyses the reaction a 2'-deoxyribonucleoside 5'-diphosphate + ATP = a 2'-deoxyribonucleoside 5'-triphosphate + ADP. It carries out the reaction a ribonucleoside 5'-diphosphate + ATP = a ribonucleoside 5'-triphosphate + ADP. Functionally, major role in the synthesis of nucleoside triphosphates other than ATP. The ATP gamma phosphate is transferred to the NDP beta phosphate via a ping-pong mechanism, using a phosphorylated active-site intermediate. This chain is Nucleoside diphosphate kinase, found in Shewanella sp. (strain MR-4).